We begin with the raw amino-acid sequence, 993 residues long: UPF0182 protein MAP_3291c (993 aa).

7 helical membrane-spanning segments follow: residues 18–38 (ILILIALGVIALLLAGPRLID), 63–83 (FVVFLIAGLLVGGIVFAGLAV), 113–133 (LVSVGVPVAIGLLAGIIAQSY), 175–195 (FVAVFLAFVANLLAHYIFGGI), 210–230 (IQLVTLVGLLVLLKAVAYWLD), 254–274 (AVLPAKLILMAIALICAAAVF), and 287–307 (IGLVLLLLSSLIVGAGWPLIV). The disordered stretch occupies residues 903–941 (NIQPTEGGAPAASPPANAPAPAVTPGSAPPVAAPPVPDG). The segment covering 929 to 939 (SAPPVAAPPVP) has biased composition (pro residues).

Belongs to the UPF0182 family.

It is found in the cell membrane. In Mycolicibacterium paratuberculosis (strain ATCC BAA-968 / K-10) (Mycobacterium paratuberculosis), this protein is UPF0182 protein MAP_3291c.